The sequence spans 373 residues: tRNA 2-selenouridine synthase (373 aa).

In terms of domain architecture, Rhodanese spans 12–136 (FINDRPMMDA…MRGFLLETTE (125 aa)). Catalysis depends on Cys95, which acts as the S-selanylcysteine intermediate.

This sequence belongs to the SelU family. In terms of assembly, monomer.

The catalysed reaction is 5-methylaminomethyl-2-thiouridine(34) in tRNA + selenophosphate + (2E)-geranyl diphosphate + H2O + H(+) = 5-methylaminomethyl-2-selenouridine(34) in tRNA + (2E)-thiogeraniol + phosphate + diphosphate. It carries out the reaction 5-methylaminomethyl-2-thiouridine(34) in tRNA + (2E)-geranyl diphosphate = 5-methylaminomethyl-S-(2E)-geranyl-thiouridine(34) in tRNA + diphosphate. It catalyses the reaction 5-methylaminomethyl-S-(2E)-geranyl-thiouridine(34) in tRNA + selenophosphate + H(+) = 5-methylaminomethyl-2-(Se-phospho)selenouridine(34) in tRNA + (2E)-thiogeraniol. The enzyme catalyses 5-methylaminomethyl-2-(Se-phospho)selenouridine(34) in tRNA + H2O = 5-methylaminomethyl-2-selenouridine(34) in tRNA + phosphate. Functionally, involved in the post-transcriptional modification of the uridine at the wobble position (U34) of tRNA(Lys), tRNA(Glu) and tRNA(Gln). Catalyzes the conversion of 2-thiouridine (S2U-RNA) to 2-selenouridine (Se2U-RNA). Acts in a two-step process involving geranylation of 2-thiouridine (S2U) to S-geranyl-2-thiouridine (geS2U) and subsequent selenation of the latter derivative to 2-selenouridine (Se2U) in the tRNA chain. In Ectopseudomonas mendocina (strain ymp) (Pseudomonas mendocina), this protein is tRNA 2-selenouridine synthase.